Here is a 380-residue protein sequence, read N- to C-terminus: Reducing-end xylose-releasing exo-oligoxylanase Rex8A (380 aa).

The active-site Proton donor is E70. Catalysis depends on D265, which acts as the Proton acceptor.

Belongs to the glycosyl hydrolase 8 (cellulase D) family.

The enzyme catalyses Hydrolysis of (1-&gt;4)-beta-D-xylose residues from the reducing end of oligosaccharides.. It participates in glycan degradation; xylan degradation. Functionally, involved in depolymerization of xylan, a major component of the lignocellulosic substrates. Acts as an exo-oligoxylanase that efficiently hydrolyzes xylooligosaccharides, releasing xylose from their reducing ends. Hydrolyzes xylooligomers of 3 to 6 xylose units to xylose and xylobiose. Besides linear xylooligosaccharides, also hydrolyzes branched xylooligomers, such as xylooligomers decorated with 4-O-methyl-D-glucuronic acid moieties. Its proposed role is the degradation of xylooligomers produced by the activity of extracellular xylanases once they have been transported inside cells. Shows minor activity on polymeric xylan (glucuronoxylan from beechwood). Is not active on cellooligosaccharides or cellulosic substrates, or on other polysaccharides such as pectin, polygalacturonic acid, laminarin, or lichenan. The polypeptide is Reducing-end xylose-releasing exo-oligoxylanase Rex8A (Paenibacillus barcinonensis).